Consider the following 2082-residue polypeptide: Probable ATP-dependent helicase PF08_0048 (2082 aa).

Residues 66–138 (KIVEPAKTPE…EEKRLKLYSK (73 aa)) enclose the HSA domain. Positions 209–221 (NNSEIVNNNASSV) are enriched in low complexity. Disordered regions lie at residues 209–234 (NNSE…DDLT) and 301–470 (NVIE…SPTR). Basic and acidic residues-rich tracts occupy residues 419-448 (NSDH…HIDN) and 455-465 (TGEDYKSDKEN). Residues 476–531 (KKEKYDEYDTKLKIEKREEENKNYEKDEHEYESDNYDKEKINKKKELILLKNDIEN) adopt a coiled-coil conformation. The interval 532–641 (DSDETSEHIK…KNDSDDNDDI (110 aa)) is disordered. Positions 536–545 (TSEHIKRDSR) are enriched in basic and acidic residues. The span at 579 to 598 (DNNNSENDNNNDNNNDNNND) shows a compositional bias: low complexity. Residues 599-627 (NNDDNNDDNNDDNNDDNNDDNNDDNNDDN) show a composition bias toward acidic residues. One can recognise a Helicase ATP-binding domain in the interval 674–839 (LYLYKNNING…WSLLHFLMPN (166 aa)). 687-694 (DEMGLGKT) contacts ATP. Residues 790–793 (DEAH) carry the DEAH box motif. Residues 1199 to 1255 (EQNNNNSKDNNNNIDNNNNIDNNNNIDNNNNIDNNNNIDNNNNNIDNNNNIDNHHNN) are disordered. A Helicase C-terminal domain is found at 1772–1922 (ALEKLLSKCK…NICINMGNFN (151 aa)). Positions 1972–2060 (EQVENKDKMN…DEMRMKIEIE (89 aa)) form a coiled coil.

Belongs to the SNF2/RAD54 helicase family. SWR1 subfamily. Component of a chromatin-remodeling complex.

It is found in the nucleus. Catalytic component of a chromatin remodeling complex. The sequence is that of Probable ATP-dependent helicase PF08_0048 from Plasmodium falciparum (isolate 3D7).